A 115-amino-acid chain; its full sequence is Superoxide reductase (115 aa).

Residues Glu-14, His-16, His-41, His-47, Cys-102, and His-105 each coordinate Fe cation.

The protein belongs to the desulfoferrodoxin family. As to quaternary structure, homotetramer. Fe cation serves as cofactor.

It carries out the reaction reduced [rubredoxin] + superoxide + 2 H(+) = oxidized [rubredoxin] + H2O2. Its function is as follows. Uses electrons from reduced NADP, by way of rubredoxin and an oxidoreductase, to catalyze the reduction of superoxide to hydrogen peroxide. In Thermococcus kodakarensis (strain ATCC BAA-918 / JCM 12380 / KOD1) (Pyrococcus kodakaraensis (strain KOD1)), this protein is Superoxide reductase (sorA).